A 162-amino-acid polypeptide reads, in one-letter code: CASP-like protein 1C1 (162 aa).

Residues 1–7 (MFSAKAR) lie on the Cytoplasmic side of the membrane. The helical transmembrane segment at 8 to 28 (WIVAVVLRVAAAGAAAVAAVL) threads the bilayer. The Extracellular segment spans residues 29–52 (MAMSHDEVIVYGMEVQAKFRYTPS). The helical transmembrane segment at 53–73 (LVFFVAANAAVSACSLVVLLV) threads the bilayer. The Cytoplasmic portion of the chain corresponds to 74–83 (PSSTSKLAAR). Residues 84–104 (LLLMADVVLGMVLAGAFAAAG) traverse the membrane as a helical segment. The Extracellular segment spans residues 105-135 (AMAELGKNGNSHAGWIAICVQVPLFCDRVRS). Residues 136–156 (ALVAGSATIVLYYLMLMYSIY) form a helical membrane-spanning segment. At 157–162 (TLPMFP) the chain is on the cytoplasmic side.

Belongs to the Casparian strip membrane proteins (CASP) family. In terms of assembly, homodimer and heterodimers.

The protein resides in the cell membrane. The chain is CASP-like protein 1C1 from Oryza sativa subsp. japonica (Rice).